Consider the following 149-residue polypeptide: uncharacterized protein (149 aa).

Positions 1-11 (MTKESKPDRLR) are enriched in basic and acidic residues. Residues 1 to 20 (MTKESKPDRLRQMGALNPKP) form a disordered region.

This is an uncharacterized protein from Sinorhizobium fredii (strain NBRC 101917 / NGR234).